Reading from the N-terminus, the 1370-residue chain is MENWSALELLPKVGIPTDFLTHVKTSAGEEMFEALRIYYGDDPERYNIHFEAIFGTFCNRLEWVYFLTSGLAAAAHAIKFHDLNKLTTGKMLFHVQVPRVASGAGLPTSRQTTIMVTKYSEKSPITIPFELSAACLTYLRETFEGTILDKILNVEAMHTVLRALKNTADAMERGLIHSFLQTLLRKAPPYFVVQTLVENATLARQALNRIQRSNILQSFKAKMLATLFLLNRTRDRDYVLKFLTRLAEAATDSILDNPTTYTTSSGAKISGVMVSTANVMQIIMSLLSSHITKETVSAPATYGNFVLSPENAVTAISYHSILADFNSYKAHLTSGQPHLPNDSLSQAGAHSLTPLSMDVIRLGEKTVIMENLRRVYKNTDTKDPLERNVDLTFFFPVGLYLPEDRGYTTVESKVKLNDTVRNALPTTAYLLNRDRAVQKIDFVDALKTLCHPVLHEPAPCLQTFTERGPPSEPAMQRLLECRFQQEPMGGAARRIPHFYRVRREVPRTVNEMKQDFVVTDFYKVGNITLYTELHPFFDFTHCQENSETVALCTPRIVIGNLPDGLAPGPFHELRTWEIMEHMRLRPPPDYEETLRLFKTTVTSPNYPELCYLVDVLVHGNVDAFLLIRTFVARCIVNMFHTRQLLVFAHSYALVTLIAEHLADGALPPQLLFHYRNLVAVLRLVTRISALPGLNNGQLAEEPLSAYVNALHDHRLWPPFVTHLPRNMEGVQVVADRQPLNPANIEARHHGVSDVPRLGAMDADEPLFVDDYRATDDEWTLQKVFYLCLMPAMTNNRACGLGLNLKTLLVDLFYRPAFLLMPAATAVSTSGTTSKESTSGVTPEDSIAAQRQAVGEMLTELVEDVATDAHTPLLQACRELFLAVQFVGEHVKVLEVRAPLDHAQRQGLPDFISRQHVLYNGCCVVTAPKTLIEYSLPVPFHRFYSNPTICAALSDDIKRYVTEFPHYHRHDGGFPLPTAFAHEYHNWLRSPFSRYSATCPNVLHSVMTLAAMLYKISPVSLVLQTKAHIHPGFALTAVRTDTFEVDMLLYSGKSCTSVIINNPIVTKEERDISTTYHVTQNINTVDMGLGYTSNTCVAYVNRVRTDMGVRVQDLFRVFPMNVYRHDEVDRWIRHAAGVERPQLLDTETISMLTFGSMSERNAAATVHGQKAACELILTPVTMDVNYFKIPNNPRGRASCMLAVDPYDTEAATKAIYDHREADAQTFAATHNPWASQAGCLSDVLYNTRHRERLGYNSKFYSPCAQYFNTEEIIAANKTLFKTIDEYLLRAKDCIRGDTDTQYVCVEGTEQLIENPCRLTQEALPILSTTTLALMETKLKGGAGAFATSETHFGNYVVGEIIPLQQSMLFNS.

The protein belongs to the herpesviridae major capsid protein family. In terms of assembly, homomultimer. Makes the hexons and eleven out of twelve pentons. Interacts with triplex proteins 1/TRX1 and 2/TRX2; adjacent capsomers are linked together in groups of three by triplexes, heterotrimeric complexes composed of one molecule of TRX1 and two molecules of TRX2. Interacts with scaffold protein; this interaction allows efficient MCP transport to the host nucleus. Interacts with capsid vertex component 2/CVC2. Interacts with the small capsomere-interacting protein/SCP.

It is found in the virion. Its subcellular location is the host nucleus. Its function is as follows. Self-assembles to form an icosahedral capsid with a T=16 symmetry, about 200 nm in diameter, and consisting of 150 hexons and 12 pentons (total of 162 capsomers). Hexons form the edges and faces of the capsid and are each composed of six MCP molecules. In contrast, one penton is found at each of the 12 vertices. Eleven of the pentons are MCP pentamers, while the last vertex is occupied by the portal complex. The capsid is surrounded by a layer of proteinaceous material designated the tegument which, in turn, is enclosed in an envelope of host cell-derived lipids containing virus-encoded glycoproteins. The sequence is that of Major capsid protein from Human cytomegalovirus (strain AD169) (HHV-5).